A 115-amino-acid polypeptide reads, in one-letter code: Protein Rev (115 aa).

Residues serine 5 and serine 8 each carry the phosphoserine; by host CK2 modification. The segment at leucine 18 to asparagine 26 is homomultimerization. The interval tyrosine 23–arginine 48 is disordered. A Nuclear localization signal and RNA-binding (RRE) motif is present at residues threonine 34–arginine 50. The span at glutamine 36–arginine 48 shows a compositional bias: basic residues. Residues leucine 73–aspartate 83 carry the Nuclear export signal and binding to XPO1 motif. The interval glycine 89–glutamate 115 is disordered. Residues serine 91 and serine 98 each carry the phosphoserine; by host modification.

Belongs to the HIV-1 REV protein family. Homomultimer; when bound to the RRE. Multimeric assembly is essential for activity and may involve XPO1. Binds to human KPNB1, XPO1, TNPO1, RANBP5 and IPO7. Interacts with the viral Integrase. Interacts with human KHDRBS1. Interacts with human NAP1; this interaction decreases Rev multimerization and stimulates its activity. Interacts with human DEAD-box helicases DDX3 and DDX24; these interactions may serve for viral RNA export to the cytoplasm and packaging, respectively. Interacts with human PSIP1; this interaction may inhibit HIV-1 DNA integration by promoting dissociation of the Integrase-LEDGF/p75 complex. Post-translationally, asymmetrically arginine dimethylated at one site by host PRMT6. Methylation impairs the RNA-binding activity and export of viral RNA from the nucleus to the cytoplasm. In terms of processing, phosphorylated by protein kinase CK2. Presence of, and maybe binding to the N-terminus of the regulatory beta subunit of CK2 is necessary for CK2-mediated Rev's phosphorylation.

It localises to the host nucleus. The protein localises to the host nucleolus. Its subcellular location is the host cytoplasm. Its function is as follows. Escorts unspliced or incompletely spliced viral pre-mRNAs (late transcripts) out of the nucleus of infected cells. These pre-mRNAs carry a recognition sequence called Rev responsive element (RRE) located in the env gene, that is not present in fully spliced viral mRNAs (early transcripts). This function is essential since most viral proteins are translated from unspliced or partially spliced pre-mRNAs which cannot exit the nucleus by the pathway used by fully processed cellular mRNAs. Rev itself is translated from a fully spliced mRNA that readily exits the nucleus. Rev's nuclear localization signal (NLS) binds directly to KPNB1/Importin beta-1 without previous binding to KPNA1/Importin alpha-1. KPNB1 binds to the GDP bound form of RAN (Ran-GDP) and targets Rev to the nucleus. In the nucleus, the conversion from Ran-GDP to Ran-GTP dissociates Rev from KPNB1 and allows Rev's binding to the RRE in viral pre-mRNAs. Rev multimerization on the RRE via cooperative assembly exposes its nuclear export signal (NES) to the surface. Rev can then form a complex with XPO1/CRM1 and Ran-GTP, leading to nuclear export of the complex. Conversion from Ran-GTP to Ran-GDP mediates dissociation of the Rev/RRE/XPO1/RAN complex, so that Rev can return to the nucleus for a subsequent round of export. Beside KPNB1, also seems to interact with TNPO1/Transportin-1, RANBP5/IPO5 and IPO7/RANBP7 for nuclear import. The nucleoporin-like HRB/RIP is an essential cofactor that probably indirectly interacts with Rev to release HIV RNAs from the perinuclear region to the cytoplasm. The protein is Protein Rev of Human immunodeficiency virus type 1 group M subtype B (isolate MN) (HIV-1).